The primary structure comprises 447 residues: Argininosuccinate synthase (447 aa).

ATP is bound by residues 17 to 25 (AFSGGLDTS) and A43. Y99 is a binding site for L-citrulline. Residues G129 and T131 each contribute to the ATP site. Residues T131, N135, and D136 each contribute to the L-aspartate site. L-citrulline is bound at residue N135. D136 is an ATP binding site. R139 and S192 together coordinate L-citrulline. Residue D194 coordinates ATP. The L-citrulline site is built by T201, E203, and E280.

Belongs to the argininosuccinate synthase family. Type 2 subfamily. In terms of assembly, homotetramer.

The protein localises to the cytoplasm. The enzyme catalyses L-citrulline + L-aspartate + ATP = 2-(N(omega)-L-arginino)succinate + AMP + diphosphate + H(+). The protein operates within amino-acid biosynthesis; L-arginine biosynthesis; L-arginine from L-ornithine and carbamoyl phosphate: step 2/3. The sequence is that of Argininosuccinate synthase from Paracidovorax citrulli (strain AAC00-1) (Acidovorax citrulli).